A 115-amino-acid chain; its full sequence is Large ribosomal subunit protein bL20c (115 aa).

This sequence belongs to the bacterial ribosomal protein bL20 family.

The protein localises to the plastid. It localises to the chloroplast. Functionally, binds directly to 23S ribosomal RNA and is necessary for the in vitro assembly process of the 50S ribosomal subunit. It is not involved in the protein synthesizing functions of that subunit. This Cycas taitungensis (Prince sago) protein is Large ribosomal subunit protein bL20c.